A 510-amino-acid chain; its full sequence is NAD(P)H-quinone oxidoreductase subunit 2 A, chloroplastic (510 aa).

The next 13 membrane-spanning stretches (helical) occupy residues Leu-24–Leu-44, Ile-57–Phe-77, Ile-99–Ile-119, Met-124–Cys-144, Leu-149–Tyr-169, Tyr-183–Gly-203, Pro-227–Ala-247, Trp-295–Ile-315, Met-323–Asp-343, Tyr-354–Leu-374, Ala-395–Phe-415, Leu-418–Leu-438, and Met-484–Ile-504.

It belongs to the complex I subunit 2 family. NDH is composed of at least 16 different subunits, 5 of which are encoded in the nucleus.

It localises to the plastid. The protein localises to the chloroplast thylakoid membrane. It catalyses the reaction a plastoquinone + NADH + (n+1) H(+)(in) = a plastoquinol + NAD(+) + n H(+)(out). The catalysed reaction is a plastoquinone + NADPH + (n+1) H(+)(in) = a plastoquinol + NADP(+) + n H(+)(out). Its function is as follows. NDH shuttles electrons from NAD(P)H:plastoquinone, via FMN and iron-sulfur (Fe-S) centers, to quinones in the photosynthetic chain and possibly in a chloroplast respiratory chain. The immediate electron acceptor for the enzyme in this species is believed to be plastoquinone. Couples the redox reaction to proton translocation, and thus conserves the redox energy in a proton gradient. The protein is NAD(P)H-quinone oxidoreductase subunit 2 A, chloroplastic of Solanum tuberosum (Potato).